A 429-amino-acid polypeptide reads, in one-letter code: Phosphoglucosamine mutase (429 aa).

The Phosphoserine intermediate role is filled by serine 96. Positions 96, 230, 232, and 234 each coordinate Mg(2+). The residue at position 96 (serine 96) is a Phosphoserine.

Belongs to the phosphohexose mutase family. It depends on Mg(2+) as a cofactor. In terms of processing, activated by phosphorylation.

The enzyme catalyses alpha-D-glucosamine 1-phosphate = D-glucosamine 6-phosphate. In terms of biological role, catalyzes the conversion of glucosamine-6-phosphate to glucosamine-1-phosphate. In Thermotoga maritima (strain ATCC 43589 / DSM 3109 / JCM 10099 / NBRC 100826 / MSB8), this protein is Phosphoglucosamine mutase.